The primary structure comprises 536 residues: Lysosomal acid glucosylceramidase (536 aa).

Positions 1 to 39 are cleaved as a signal peptide; the sequence is MELSSPSREEYPMPRGRVGIMAASLMGLLLLHTVSWVSG. Intrachain disulfides connect Cys43–Cys55 and Cys57–Cys62. Asn58, Asn98, Asn185, and Asn208 each carry an N-linked (GlcNAc...) asparagine glycan. Glu274 serves as the catalytic Proton donor. An N-linked (GlcNAc...) asparagine glycan is attached at Asn309. Glu379 acts as the Nucleophile in catalysis. The N-linked (GlcNAc...) asparagine glycan is linked to Asn501.

This sequence belongs to the glycosyl hydrolase 30 family. As to quaternary structure, interacts with saposin-C. Interacts with SCARB2. Interacts with TCP1. Interacts with GRN; this interaction prevents aggregation of GBA1-SCARB2 complex via interaction with HSPA1A upon stress.

It is found in the lysosome membrane. It catalyses the reaction a beta-D-glucosyl-(1&lt;-&gt;1')-N-acylsphing-4-enine + H2O = an N-acylsphing-4-enine + D-glucose. It carries out the reaction a beta-D-galactosyl-(1&lt;-&gt;1')-N-acylsphing-4-enine + H2O = an N-acylsphing-4-enine + D-galactose. The enzyme catalyses cholesteryl 3-beta-D-glucoside + H2O = cholesterol + D-glucose. The catalysed reaction is a beta-D-glucosyl-(1&lt;-&gt;1')-N-acylsphing-4-enine + cholesterol = cholesteryl 3-beta-D-glucoside + an N-acylsphing-4-enine. It catalyses the reaction beta-D-glucosyl-N-(9Z-octadecenoyl)-sphing-4E-enine + cholesterol = N-(9Z-octadecenoyl)-sphing-4-enine + cholesteryl 3-beta-D-glucoside. It carries out the reaction beta-D-glucosyl-N-octanoylsphing-4E-enine + cholesterol = N-octanoylsphing-4-enine + cholesteryl 3-beta-D-glucoside. The enzyme catalyses beta-D-glucosyl-N-dodecanoylsphing-4-enine + cholesterol = N-dodecanoylsphing-4-enine + cholesteryl 3-beta-D-glucoside. The catalysed reaction is beta-D-glucosyl-(1&lt;-&gt;1)-N-octadecanoylsphing-4-enine + cholesterol = N-octadecanoylsphing-4-enine + cholesteryl 3-beta-D-glucoside. It catalyses the reaction beta-D-glucosyl-(1&lt;-&gt;1')-N-(15Z-tetracosenoyl)-sphing-4-enine + cholesterol = N-(15Z-tetracosenoyl)-sphing-4-enine + cholesteryl 3-beta-D-glucoside. It carries out the reaction a beta-D-galactosyl-(1&lt;-&gt;1')-N-acylsphing-4-enine + cholesterol = cholesteryl 3-beta-D-galactoside + an N-acylsphing-4-enine. The enzyme catalyses 1-(beta-D-galactosyl)-N-dodecanoylsphing-4-enine + cholesterol = cholesteryl 3-beta-D-galactoside + N-dodecanoylsphing-4-enine. The catalysed reaction is a beta-D-xylosyl-(1&lt;-&gt;1')-N-acylsphing-4-enine + cholesterol = cholesteryl 3-beta-D-xyloside + an N-acylsphing-4-enine. It catalyses the reaction beta-D-xylosyl-(1&lt;-&gt;1')-N-(9Z-octadecenoyl)-sphing-4-enine + cholesterol = cholesteryl 3-beta-D-xyloside + N-(9Z-octadecenoyl)-sphing-4-enine. It participates in steroid metabolism; cholesterol metabolism. The protein operates within sphingolipid metabolism. Functionally, glucosylceramidase that catalyzes, within the lysosomal compartment, the hydrolysis of glucosylceramides/GlcCers (such as beta-D-glucosyl-(1&lt;-&gt;1')-N-acylsphing-4-enine) into free ceramides (such as N-acylsphing-4-enine) and glucose. Plays a central role in the degradation of complex lipids and the turnover of cellular membranes. Through the production of ceramides, participates in the PKC-activated salvage pathway of ceramide formation. Catalyzes the glucosylation of cholesterol, through a transglucosylation reaction where glucose is transferred from GlcCer to cholesterol. GlcCer containing mono-unsaturated fatty acids (such as beta-D-glucosyl-N-(9Z-octadecenoyl)-sphing-4-enine) are preferred as glucose donors for cholesterol glucosylation when compared with GlcCer containing same chain length of saturated fatty acids (such as beta-D-glucosyl-N-octadecanoyl-sphing-4-enine). Under specific conditions, may alternatively catalyze the reverse reaction, transferring glucose from cholesteryl 3-beta-D-glucoside to ceramide. Can also hydrolyze cholesteryl 3-beta-D-glucoside producing glucose and cholesterol. Catalyzes the hydrolysis of galactosylceramides/GalCers (such as beta-D-galactosyl-(1&lt;-&gt;1')-N-acylsphing-4-enine), as well as the transfer of galactose between GalCers and cholesterol in vitro, but with lower activity than with GlcCers. Contrary to GlcCer and GalCer, xylosylceramide/XylCer (such as beta-D-xyosyl-(1&lt;-&gt;1')-N-acylsphing-4-enine) is not a good substrate for hydrolysis, however it is a good xylose donor for transxylosylation activity to form cholesteryl 3-beta-D-xyloside. This is Lysosomal acid glucosylceramidase (GBA1) from Bos taurus (Bovine).